The primary structure comprises 66 residues: Neurotoxin Cex11 (66 aa).

The region spanning 1-64 (KEGYPVNIYT…SYPYPEKSCG (64 aa)) is the LCN-type CS-alpha/beta domain. 4 disulfides stabilise this stretch: C12–C63, C16–C39, C25–C44, and C29–C46. A Cysteine amide modification is found at C63. A propeptide spanning residues 64–66 (GRK) is cleaved from the precursor.

The protein belongs to the long (4 C-C) scorpion toxin superfamily. Sodium channel inhibitor family. Beta subfamily. Expressed by the venom gland.

The protein resides in the secreted. Functionally, beta toxins bind voltage-independently at site-4 of sodium channels (Nav) and shift the voltage of activation toward more negative potentials thereby affecting sodium channel activation and promoting spontaneous and repetitive firing. This chain is Neurotoxin Cex11, found in Centruroides exilicauda (Bark scorpion).